The primary structure comprises 171 residues: Peptide methionine sulfoxide reductase MsrA (171 aa).

Residue Cys13 is part of the active site.

It belongs to the MsrA Met sulfoxide reductase family.

It catalyses the reaction L-methionyl-[protein] + [thioredoxin]-disulfide + H2O = L-methionyl-(S)-S-oxide-[protein] + [thioredoxin]-dithiol. It carries out the reaction [thioredoxin]-disulfide + L-methionine + H2O = L-methionine (S)-S-oxide + [thioredoxin]-dithiol. Functionally, has an important function as a repair enzyme for proteins that have been inactivated by oxidation. Catalyzes the reversible oxidation-reduction of methionine sulfoxide in proteins to methionine. In Mycobacterium sp. (strain JLS), this protein is Peptide methionine sulfoxide reductase MsrA.